The primary structure comprises 544 residues: CTP synthase (544 aa).

The interval 1-265 (MTKFIFVTGG…DNIITEQLQL (265 aa)) is amidoligase domain. S13 is a binding site for CTP. Residue S13 coordinates UTP. Residues 14-19 (SLGKGI) and D71 contribute to the ATP site. D71 and E139 together coordinate Mg(2+). CTP-binding positions include 146–148 (DIE), 186–191 (KTKPTQ), and K222. Residues 186 to 191 (KTKPTQ) and K222 contribute to the UTP site. Residues 290-544 (KIAMVGKYVD…VKAALNNKKA (255 aa)) form the Glutamine amidotransferase type-1 domain. An L-glutamine-binding site is contributed by G353. C380 serves as the catalytic Nucleophile; for glutamine hydrolysis. L-glutamine-binding positions include 381–384 (LGMQ), E404, and R471. Active-site residues include H517 and E519.

Belongs to the CTP synthase family. Homotetramer.

The enzyme catalyses UTP + L-glutamine + ATP + H2O = CTP + L-glutamate + ADP + phosphate + 2 H(+). It catalyses the reaction L-glutamine + H2O = L-glutamate + NH4(+). It carries out the reaction UTP + NH4(+) + ATP = CTP + ADP + phosphate + 2 H(+). It functions in the pathway pyrimidine metabolism; CTP biosynthesis via de novo pathway; CTP from UDP: step 2/2. With respect to regulation, allosterically activated by GTP, when glutamine is the substrate; GTP has no effect on the reaction when ammonia is the substrate. The allosteric effector GTP functions by stabilizing the protein conformation that binds the tetrahedral intermediate(s) formed during glutamine hydrolysis. Inhibited by the product CTP, via allosteric rather than competitive inhibition. Its function is as follows. Catalyzes the ATP-dependent amination of UTP to CTP with either L-glutamine or ammonia as the source of nitrogen. Regulates intracellular CTP levels through interactions with the four ribonucleotide triphosphates. The protein is CTP synthase of Neisseria meningitidis serogroup B (strain ATCC BAA-335 / MC58).